Here is a 1073-residue protein sequence, read N- to C-terminus: Pharyngeal muscle protein 2 (1073 aa).

Positions I9–L43 constitute an SAP domain. 3 disordered regions span residues V59 to V186, E207 to T305, and L337 to L388. Positions E91 to S111 are enriched in acidic residues. Basic and acidic residues predominate over residues H112–D127. Over residues E128–A151 the composition is skewed to acidic residues. 2 stretches are compositionally biased toward basic and acidic residues: residues V156–E182 and E207–E217. Acidic residues-rich tracts occupy residues E223–P232 and Q248–I265. A compositionally biased stretch (basic and acidic residues) spans A277–H293. Low complexity predominate over residues A366 to S386. The RRM domain maps to T396–E478. Disordered regions lie at residues L481–R759, Q845–V917, and S1015–Y1073. Composition is skewed to low complexity over residues E496–P505 and P513–A524. Positions I573–R587 are enriched in basic and acidic residues. A compositionally biased stretch (low complexity) spans T588–T622. Residues V674–Q689 are compositionally biased toward polar residues. Composition is skewed to basic and acidic residues over residues V707–P727 and P742–R759. Low complexity-rich tracts occupy residues S901 to V917, S1015 to S1026, and Q1034 to N1060.

In terms of tissue distribution, expressed in most tissues including the hypodermal, muscle, neuronal, vulval and intestinal tissues. Isoform a: Expressed in the pharynx, nerve ring, intestine, neurons and ventral nerve cord.

The protein localises to the nucleus. Functionally, involved in pharyngeal muscle development and ensures pharyngeal grinder function during feeding. Plays a role in the defense against the accumulation of ingested live pathogenic bacteria in the intestine. Has a role in the determination of life span. In Caenorhabditis elegans, this protein is Pharyngeal muscle protein 2.